Reading from the N-terminus, the 456-residue chain is Bis(5'-adenosyl)-triphosphatase enpp4 (456 aa).

An N-terminal signal peptide occupies residues 1–18 (MFNMKILVIPLFWGLVTG). The Extracellular segment spans residues 19-410 (YKGNSSDSSA…DQWCINLPEA (392 aa)). D37 and T73 together coordinate Zn(2+). T73 functions as the AMP-threonine intermediate in the catalytic mechanism. N94 is a binding site for substrate. N148 is a glycosylation site (N-linked (GlcNAc...) asparagine). Y157 contributes to the substrate binding site. N169 is a glycosylation site (N-linked (GlcNAc...) asparagine). 4 residues coordinate Zn(2+): D192, H196, D240, and H241. D192 contributes to the substrate binding site. C257 and C290 form a disulfide bridge. N279 and N330 each carry an N-linked (GlcNAc...) asparagine glycan. H339 is a Zn(2+) binding site. N-linked (GlcNAc...) asparagine glycosylation occurs at N389. A disulfide bridge connects residues C397 and C404. A helical membrane pass occupies residues 411–431 (IGIVVSALLVLTMLTGLMIFM). Residues 432–456 (RSRASTSRPFSRLQLQEDDDDPLID) are Cytoplasmic-facing.

The protein belongs to the nucleotide pyrophosphatase/phosphodiesterase family. Requires Zn(2+) as cofactor.

The protein resides in the cell membrane. The enzyme catalyses P(1),P(3)-bis(5'-adenosyl) triphosphate + H2O = AMP + ADP + 2 H(+). Hydrolyzes extracellular Ap3A into AMP and ADP, and Ap4A into AMP and ATP. Ap3A and Ap4A are diadenosine polyphosphates thought to induce proliferation of vascular smooth muscle cells. Acts as a procoagulant, mediating platelet aggregation at the site of nascent thrombus via release of ADP from Ap3A and activation of ADP receptors. This is Bis(5'-adenosyl)-triphosphatase enpp4 (Enpp4) from Mus musculus (Mouse).